Consider the following 157-residue polypeptide: MPTWHYSYKLRDESRIAKAVQFDIPVSIKDMREAVAAIRGKKVSEAKKLLENVIALREPIPFKRYKGKLSHKRGLPAKWKWPIGRYPVKAAKYLLRLLEHVEANADNKGLDKDKLVIVHIAAHKGMTLKRWMPRAFGRATPKFRRTSHVEIVVKEVD.

It belongs to the universal ribosomal protein uL22 family. Part of the 50S ribosomal subunit.

This protein binds specifically to 23S rRNA. It makes multiple contacts with different domains of the 23S rRNA in the assembled 50S subunit and ribosome. Functionally, the globular domain of the protein is located near the polypeptide exit tunnel on the outside of the subunit, while an extended beta-hairpin is found that lines the wall of the exit tunnel in the center of the 70S ribosome. This Staphylothermus marinus (strain ATCC 43588 / DSM 3639 / JCM 9404 / F1) protein is Large ribosomal subunit protein uL22.